Here is a 793-residue protein sequence, read N- to C-terminus: Signal transducer and activator of transcription 5A (793 aa).

At Tyr90 the chain carries Phosphotyrosine. Residue Ser128 is modified to Phosphoserine. The 98-residue stretch at Trp589 to Val686 folds into the SH2 domain. At Tyr682 the chain carries Phosphotyrosine. Tyr694 is modified (phosphotyrosine; by JAK2). The disordered stretch occupies residues Asp772–Ser793. The residue at position 779 (Ser779) is a Phosphoserine.

It belongs to the transcription factor STAT family. Forms a homodimer or a heterodimer with a related family member. Binds NR3C1. Interacts with NCOA1 and SOCS7. Interacts with ERBB4. Interacts with EBF4. In terms of processing, ISGylated. Tyrosine phosphorylated in response to KITLG/SCF, IL2, IL3, IL7, IL15, CSF2/GMCSF, GH1, PRL, EPO and THPO. Activated KIT promotes phosphorylation on tyrosine residues and subsequent translocation to the nucleus. Tyrosine phosphorylated in response to constitutively activated FGFR1, FGFR2, FGFR3 and FGFR4. Tyrosine phosphorylation is required for DNA-binding activity and dimerization. Serine phosphorylation is also required for maximal transcriptional activity. Tyrosine phosphorylated in response to signaling via activated FLT3; wild-type FLT3 results in much weaker phosphorylation than constitutively activated mutant FLT3. Alternatively, can be phosphorylated by JAK2 at Tyr-694. Expressed in heart, lung, and weakly in muscle.

The protein resides in the cytoplasm. Its subcellular location is the nucleus. In terms of biological role, carries out a dual function: signal transduction and activation of transcription. Mediates cellular responses to the cytokine KITLG/SCF and other growth factors. May mediate cellular responses to activated FGFR1, FGFR2, FGFR3 and FGFR4. Binds to the GAS element and activates PRL-induced transcription. Regulates the expression of milk proteins during lactation. The sequence is that of Signal transducer and activator of transcription 5A (Stat5a) from Rattus norvegicus (Rat).